A 339-amino-acid chain; its full sequence is tRNA N6-adenosine threonylcarbamoyltransferase (339 aa).

Residues histidine 112 and histidine 116 each contribute to the Fe cation site. Substrate is bound by residues 135 to 139, aspartate 168, glycine 181, and asparagine 273; that span reads LVSGG. A Fe cation-binding site is contributed by aspartate 301.

The protein belongs to the KAE1 / TsaD family. Fe(2+) serves as cofactor.

It is found in the cytoplasm. The catalysed reaction is L-threonylcarbamoyladenylate + adenosine(37) in tRNA = N(6)-L-threonylcarbamoyladenosine(37) in tRNA + AMP + H(+). Required for the formation of a threonylcarbamoyl group on adenosine at position 37 (t(6)A37) in tRNAs that read codons beginning with adenine. Is involved in the transfer of the threonylcarbamoyl moiety of threonylcarbamoyl-AMP (TC-AMP) to the N6 group of A37, together with TsaE and TsaB. TsaD likely plays a direct catalytic role in this reaction. In Coxiella burnetii (strain RSA 493 / Nine Mile phase I), this protein is tRNA N6-adenosine threonylcarbamoyltransferase.